Here is a 563-residue protein sequence, read N- to C-terminus: Endoglucanase B (563 aa).

The or 31 signal peptide spans methionine 1 to alanine 27. Residue glutamate 204 is the Proton donor of the active site. Residue glutamate 363 is the Nucleophile of the active site. The tract at residues serine 476–threonine 495 is disordered. The Dockerin domain occupies aspartate 496–tyrosine 562.

This sequence belongs to the glycosyl hydrolase 5 (cellulase A) family.

The enzyme catalyses Endohydrolysis of (1-&gt;4)-beta-D-glucosidic linkages in cellulose, lichenin and cereal beta-D-glucans.. Functionally, this enzyme catalyzes the endohydrolysis of 1,4-beta-glucosidic linkages in cellulose, lichenin and cereal beta-D-glucans. In Acetivibrio thermocellus (strain ATCC 27405 / DSM 1237 / JCM 9322 / NBRC 103400 / NCIMB 10682 / NRRL B-4536 / VPI 7372) (Clostridium thermocellum), this protein is Endoglucanase B (celB).